Reading from the N-terminus, the 147-residue chain is Small ribosomal subunit protein bS6 (147 aa).

Residues 114 to 147 are disordered; the sequence is GKGTRAAEQAAAAEAAAPAAAPAEPASAEPAPAV. Residues 119 to 147 are compositionally biased toward low complexity; it reads AAEQAAAAEAAAPAAAPAEPASAEPAPAV.

This sequence belongs to the bacterial ribosomal protein bS6 family.

Its function is as follows. Binds together with bS18 to 16S ribosomal RNA. The chain is Small ribosomal subunit protein bS6 from Koribacter versatilis (strain Ellin345).